Consider the following 827-residue polypeptide: MSSKQATSPFACTVDGEETMTQDLTSREKEEGSDQHPASHLPLHPIMHNKPHSEELPTLVSTIQQDADWDSVLSSQQRMESENNKLCSLYSFRNTSTSPHKPDEGSREREIMNSVTFGTPERRKGSLADVVDTLKQKKLEEMTRTEQEDSSCMEKLLSKDWKEKMERLNTSELLGEIKGTPESLAEKERQLSTMITQLISLREQLLAAHDEQKKLAASQIEKQRQQMDLARQQQEQIARQQQQLLQQQHKINLLQQQIQVQGHMPPLMIPIFPHDQRTLAAAAAAQQGFLFPPGITYKPGDNYPVQFIPSTMAAAAASGLSPLQLQKGHVSHPQINPRLKGISDRLGRNLDPYEHGGGHSYNHKQIEQLYAAQLASMQVSPGAKMPSTPQPPNSAGAVSPTGIKNEKRGTSPVTQVKDETTAQPLNLSSRPKTAEPVKSPTSPTQSLFPASKTSPVNLPNKSSIPSPIGGSLGRGSSLDILSSLNSPALFGDQDTVMKAIQEARKMREQIQREQQQQPHGVDGKLSSMNSMGLSNCRNEKERTRFENLGPQLTGKSSEDGKLGPGVIDLTRPEDAEGSKAMNGSAAKLQQYYCWPTGGATVAEARVYRDARGRASSEPHIKRPMNAFMVWAKDERRKILQAFPDMHNSNISKILGSRWKSMSNQEKQPYYEEQARLSKIHLEKYPNYKYKPRPKRTCIVDGKKLRIGEYKQLMRSRRQEMRQFFTVGQQPQIPITTGTGVVYPGAITMATTTPSPQMTSDCSSTSASPEPSLPVIQSTYGMKMDGASLAGNDMINGEDEMEAYDDYEDDPKSDYSSENEAPEPVSAN.

Positions Met1–Phe10 are enriched in polar residues. The tract at residues Met1–Pro51 is disordered. Basic and acidic residues predominate over residues Thr25 to Asp34. The residue at position 119 (Thr119) is a Phosphothreonine. Residues Leu184–Gln257 adopt a coiled-coil conformation. Disordered stretches follow at residues His329–Ser360 and Ser380–Gly470. A compositionally biased stretch (basic and acidic residues) spans Gly341–Gly357. A Phosphoserine modification is found at Ser399. Thr401 bears the Phosphothreonine mark. Residues Lys404 and Lys417 each participate in a glycyl lysine isopeptide (Lys-Gly) (interchain with G-Cter in SUMO) cross-link. Polar residues-rich tracts occupy residues Thr421 to Pro431 and Ser439 to Lys461. Ser439 and Ser442 each carry phosphoserine. The HMG box DNA-binding region spans Ile620 to Lys688. 2 disordered regions span residues Thr752–Leu772 and Ala786–Asn827. Acidic residues predominate over residues Asn795 to Asp808.

As to quaternary structure, homodimer. Interacts with DAZAP2. May interact with CENPK. Post-translationally, sumoylation inhibits the transcriptional activity.

Its subcellular location is the nucleus. The protein resides in the cytoplasm. Its function is as follows. Transcription factor that plays a key role in several developmental processes, including neurogenesis, chondrocytes differentiation and cartilage formation. Specifically binds the 5'-AACAAT-3' DNA motif present in enhancers and super-enhancers and promotes expression of genes important for chondrogenesis. Required for overt chondrogenesis when condensed prechondrocytes differentiate into early stage chondrocytes: SOX5 and SOX6 cooperatively bind with SOX9 on active enhancers and super-enhancers associated with cartilage-specific genes, and thereby potentiate SOX9's ability to transactivate. Not involved in precartilaginous condensation, the first step in chondrogenesis, during which skeletal progenitors differentiate into prechondrocytes. Together with SOX5, required to form and maintain a pool of highly proliferating chondroblasts between epiphyses and metaphyses, to form columnar chondroblasts, delay chondrocyte prehypertrophy but promote hypertrophy, and to delay terminal differentiation of chondrocytes on contact with ossification fronts. Binds to the proximal promoter region of the myelin protein MPZ gene, and is thereby involved in the differentiation of oligodendroglia in the developing spinal tube. Binds to the gene promoter of MBP and acts as a transcriptional repressor. The polypeptide is Transcription factor SOX-6 (Rattus norvegicus (Rat)).